The following is a 528-amino-acid chain: MAPTALLSVSDKSGLLPLAKTLHERYGYQLLSSGGTAKVLQEAGLPVTPVADHTGAPEILGGRVKTLHPRIHGGILARRGDPAHEADLQAQQITPIDVVVVNLYPFRETVSDPAVSWERAIENIDIGGPTMVRSAAKNHDHVAVLTDPDQYDRFLQDLAASGGAVSAAVRRRLALDAFAHTAAYDAAITRWMQNRPELQPADDGSASSLPWLEALPLRQRLRYGENPHQGAAWYSAPKAGWGGAIQLQGKELSTNNLLDLEAALATVREFGYGEGGSHPAQRPAAVVVKHTNPCGVAVADGHAAALTRALDGDRVSAFGGIVAVNGRVDAPAARELTSLFLECVVAPEYAPEAREILASKGNLRLLELPPTAIDAAGHDHVRSILGGLLVQDLDDQPVAADGWTVASERAPSQAERDDLCFAWQLVRHVRSNAIVVARNGQSLGIGAGQMNRVGSARIALEASGDGARGAVLASDGFFPFDDTVRLAAQHGITAVIHPGGSKRDQDSIKACNELGLAMLLTGQRHFLH.

In terms of domain architecture, MGS-like spans M1–T146.

The protein belongs to the PurH family.

The catalysed reaction is (6R)-10-formyltetrahydrofolate + 5-amino-1-(5-phospho-beta-D-ribosyl)imidazole-4-carboxamide = 5-formamido-1-(5-phospho-D-ribosyl)imidazole-4-carboxamide + (6S)-5,6,7,8-tetrahydrofolate. It catalyses the reaction IMP + H2O = 5-formamido-1-(5-phospho-D-ribosyl)imidazole-4-carboxamide. The protein operates within purine metabolism; IMP biosynthesis via de novo pathway; 5-formamido-1-(5-phospho-D-ribosyl)imidazole-4-carboxamide from 5-amino-1-(5-phospho-D-ribosyl)imidazole-4-carboxamide (10-formyl THF route): step 1/1. It participates in purine metabolism; IMP biosynthesis via de novo pathway; IMP from 5-formamido-1-(5-phospho-D-ribosyl)imidazole-4-carboxamide: step 1/1. The sequence is that of Bifunctional purine biosynthesis protein PurH from Synechococcus sp. (strain WH7803).